Here is a 65-residue protein sequence, read N- to C-terminus: Toxin AaHIT4 (65 aa).

The 64-residue stretch at Glu1–Asp64 folds into the LCN-type CS-alpha/beta domain. Cystine bridges form between Cys12–Cys63, Cys16–Cys38, Cys23–Cys45, and Cys27–Cys47.

The protein belongs to the long (4 C-C) scorpion toxin superfamily. Sodium channel inhibitor family. Expressed by the venom gland.

The protein resides in the secreted. Functionally, has a toxic effect on insects and mammals and is capable of competing with anti-insect scorpion toxins for binding to the sodium channel (Nav) of insects. It also modulates the binding of alpha-type and beta-type anti-mammal scorpion toxins to the mammal sodium channel. It may act on both site 3 and site 4 of voltage-gated sodium channels. This is Toxin AaHIT4 from Androctonus australis (Sahara scorpion).